The sequence spans 164 residues: Methanogen homoaconitase small subunit 2 (164 aa).

Residues 26 to 29 (YLRT) carry the YLRT motif.

This sequence belongs to the LeuD family. LeuD type 2 subfamily. As to quaternary structure, heterotetramer of 2 HacA and 2 HacB proteins. Cannot form a complex with LeuC.

It carries out the reaction (2R)-homocitrate = (2R,3S)-homoisocitrate. The catalysed reaction is (2R)-homocitrate = cis-homoaconitate + H2O. It catalyses the reaction (2R,3S)-homoisocitrate = cis-homoaconitate + H2O. The enzyme catalyses cis-(homo)2aconitate + H2O = (2R,3S)-iso(homo)2citrate. It carries out the reaction cis-(homo)3aconitate + H2O = (2R,3S)-iso(homo)3citrate. It functions in the pathway organic acid metabolism; 2-oxosuberate biosynthesis. In terms of biological role, component of a hydro-lyase with broad substrate specificity for cis-unsaturated tricarboxylic acids. Catalyzes both the reversible dehydration of (R)-homocitrate ((R)-2-hydroxybutane-1,2,4-tricarboxylate) to produce cis-homoaconitate ((Z)-but-1-ene-1,2,4-tricarboxylate), and its hydration to homoisocitrate ((1R,2S)-1-hydroxybutane-1,2,4-tricarboxylate). Is also able to hydrate the analogous longer chain substrates cis-homo(2)-aconitate, cis-homo(3)-aconitate. These reactions are part of the biosynthesis pathway of coenzyme B. This chain is Methanogen homoaconitase small subunit 2 (hacB2), found in Methanosarcina acetivorans (strain ATCC 35395 / DSM 2834 / JCM 12185 / C2A).